A 717-amino-acid polypeptide reads, in one-letter code: Mitotic spindle assembly checkpoint protein MAD1 (717 aa).

Met1 carries the post-translational modification N-acetylmethionine. Ser16 bears the Phosphoserine mark. Residues 46–631 (EQSMQLEERA…QTKIQEFRKV (586 aa)) adopt a coiled-coil conformation. Position 61 is an N6-acetyllysine; alternate (Lys61). Lys61 is covalently cross-linked (Glycyl lysine isopeptide (Lys-Gly) (interchain with G-Cter in SUMO2); alternate). Residues 79–82 (KRAR) carry the Nuclear localization signal motif. A phosphoserine mark is found at Ser214 and Ser428. The interval 380–532 (LLEERKKREI…EMQMERLTLQ (153 aa)) is necessary for interaction with NEK2. The tract at residues 540 to 551 (TKVLHMSLNPAS) is necessary for interaction with MAD2L1.

Belongs to the MAD1 family. As to quaternary structure, homodimer. Dimerizes via its N- and C- terminal regions. Heterodimerizes with MAD2L1 in order to form a tetrameric MAD1L1-MAD2L1 core complex. Interacts with the closed conformation form of MAD2L1 (C-MAD2) and open conformation form of MAD2L1 (O-MAD2). It is unclear whether MAD1L1 dimerization promotes the conversion of closed to open conformation of MAD2L1. Formation of a heterotetrameric core complex containing two molecules each of MAD1L1 and of MAD2L1 promotes binding of another molecule of MAD2L1 to each MAD2L1, resulting in a heterohexamer. Perturbation of the original MAD1L1-MAD2L1 structure by the spindle checkpoint may decrease MAD2L1 affinity for MAD1L1. CDC20 can compete with MAD1L1 for MAD2L1 binding, until the attachment and/or tension dampen the checkpoint signal, preventing further release of MAD2L1 on to CDC20. Also able to interact with the BUB1/BUB3 complex. Interacts with NEK2. Interacts with TTK. Interacts with TPR; the interactions occurs in a microtubule-independent manner. Interacts with IK. Interacts with the viral Tax protein. Interacts with PRAP1. Phosphorylated; by BUB1. Become hyperphosphorylated in late S through M phases or after mitotic spindle damage.

It is found in the nucleus. Its subcellular location is the chromosome. It localises to the centromere. The protein resides in the kinetochore. The protein localises to the nucleus envelope. It is found in the cytoplasm. Its subcellular location is the cytoskeleton. It localises to the microtubule organizing center. The protein resides in the centrosome. The protein localises to the spindle. It is found in the spindle pole. Its function is as follows. Component of the spindle-assembly checkpoint that prevents the onset of anaphase until all chromosomes are properly aligned at the metaphase plate. Forms a heterotetrameric complex with the closed conformation form of MAD2L1 (C-MAD2) at unattached kinetochores during prometaphase, recruits an open conformation of MAD2L1 (O-MAD2) and promotes the conversion of O-MAD2 to C-MAD2, which ensures mitotic checkpoint signaling. This Cricetulus griseus (Chinese hamster) protein is Mitotic spindle assembly checkpoint protein MAD1 (MAD1L1).